The sequence spans 268 residues: Zinc transporter ZupT (268 aa).

Transmembrane regions (helical) follow at residues 5 to 25 (ILFA…GSLI), 36 to 56 (VLTI…MIEI), 75 to 95 (VVTV…DKLI), 124 to 144 (MGLF…LATF), 157 to 177 (IAVA…APIF), 187 to 207 (FILS…GYFL), 211 to 231 (FFSP…MVYI), and 248 to 268 (FAIG…LLFT). Fe(2+) is bound by residues N136 and E139. Positions 139 and 164 each coordinate Zn(2+). Fe(2+) is bound by residues N165, E168, and E197. Residue E168 participates in Zn(2+) binding.

Belongs to the ZIP transporter (TC 2.A.5) family. ZupT subfamily.

It localises to the cell membrane. It catalyses the reaction Zn(2+)(in) = Zn(2+)(out). In terms of biological role, mediates zinc uptake. May also transport other divalent cations. This chain is Zinc transporter ZupT, found in Chlorobium chlorochromatii (strain CaD3).